The sequence spans 478 residues: Noelin-2 (478 aa).

An N-terminal signal peptide occupies residues 1 to 16 (MSVPLLKIGAVLSTMA). 7 N-linked (GlcNAc...) asparagine glycosylation sites follow: N33, N98, N179, N299, N334, N423, and N465. 2 coiled-coil regions span residues 86–109 (SREL…LELR) and 160–218 (LEQY…QKLG). The Olfactomedin-like domain maps to 218–470 (GCGKLTGVSN…QVLYNVTLFH (253 aa)). A disulfide bridge connects residues C219 and C401.

In terms of assembly, peripherally associated with AMPAR complex. AMPAR complex consists of an inner core made of 4 pore-forming GluA/GRIA proteins (GRIA1, GRIA2, GRIA3 and GRIA4) and 4 major auxiliary subunits arranged in a twofold symmetry. One of the two pairs of distinct binding sites is occupied either by CNIH2, CNIH3 or CACNG2, CACNG3. The other harbors CACNG2, CACNG3, CACNG4, CACNG8 or GSG1L. This inner core of AMPAR complex is complemented by outer core constituents binding directly to the GluA/GRIA proteins at sites distinct from the interaction sites of the inner core constituents. Outer core constituents include at least PRRT1, PRRT2, CKAMP44/SHISA9, FRRS1L and NRN1. The proteins of the inner and outer core serve as a platform for other, more peripherally associated AMPAR constituents, including OLFM2. Alone or in combination, these auxiliary subunits control the gating and pharmacology of the AMPAR complex and profoundly impact their biogenesis and protein processing. Interacts with GRIA2. Interacts with OLFM1 and OLFM3. Interacts with SRF; the interaction promotes dissociation of SRF from the transcriptional repressor HEY2. Interacts with RUNX2. As to expression, expressed in the brain (at protein level). Expressed in carotid arteries and the aorta, mainly in aortic SMCs.

The protein localises to the secreted. It is found in the synapse. The protein resides in the membrane. It localises to the nucleus. Its subcellular location is the cytoplasm. In terms of biological role, involved in transforming growth factor beta (TGF-beta)-induced smooth muscle differentiation. TGF-beta induces expression and nuclear translocation of OLFM2 where it binds to SRF, causing its dissociation from the transcriptional repressor HEY2/HERP1 and facilitating binding of SRF to target genes. Plays a role in AMPAR complex organization. Is a regulator of vascular smooth-muscle cell (SMC) phenotypic switching, that acts by promoting RUNX2 and inhibiting MYOCD binding to SRF. SMC phenotypic switching is the process through which vascular SMCs undergo transition between a quiescent contractile phenotype and a proliferative synthetic phenotype in response to pathological stimuli. SMC phenotypic plasticity is essential for vascular development and remodeling. This Rattus norvegicus (Rat) protein is Noelin-2 (Olfm2).